The chain runs to 5098 residues: Malformin synthetase mlfA (5098 aa).

The segment at 225–616 (ERHAANRPHS…CGRADTQVKL (392 aa)) is adenylation 1. In terms of domain architecture, Carrier 1 spans 756–829 (SRLEQEIQLA…EAASLAKVQE (74 aa)). O-(pantetheine 4'-phosphoryl)serine is present on serine 790. The condensation 1 stretch occupies residues 867-1298 (EDVFPCTTMQ…ALDSLTLLQA (432 aa)). An adenylation 2 region spans residues 1326-1715 (DGWVTRQPES…GRKDTQVKLR (390 aa)). In terms of domain architecture, Carrier 2 spans 1853-1930 (TAASELERTL…QLAAEFGEPA (78 aa)). Serine 1890 is modified (O-(pantetheine 4'-phosphoryl)serine). Disordered regions lie at residues 1930–1960 (AGQSASSASSTTEEGFTFSTPDDSSTNDGVD) and 1993–2022 (GSSSSSKTPSGSSSSSSSSSRKKKSARVVS). Low complexity-rich tracts occupy residues 1933-1957 (SASSASSTTEEGFTFSTPDDSSTND) and 1993-2011 (GSSSSSKTPSGSSSSSSSS). Residues 2063–2478 (EDIYPATALQ…ALSHSDRQTL (416 aa)) form a condensation 2 region. Positions 2501–2893 (VRTPHAPAVC…IGRRDGQLKL (393 aa)) are adenylation 3. A Carrier 3 domain is found at 3029-3105 (RPVTAQEREM…QLMRHLSATR (77 aa)). Serine 3066 is subject to O-(pantetheine 4'-phosphoryl)serine. 2 condensation regions span residues 3122 to 3587 (WVAL…TYDQ) and 3608 to 4027 (NIYP…EQLM). The adenylation 4 stretch occupies residues 4052–4442 (HASREAVCAW…VGRKDNQIKF (391 aa)). Positions 4576–4652 (MPSTAAERKM…DLAYRTTNLV (77 aa)) constitute a Carrier 4 domain. Serine 4613 is modified (O-(pantetheine 4'-phosphoryl)serine). The condensation 5 stretch occupies residues 4689-5016 (DVLPTTSFQR…LQTIVQHQNN (328 aa)).

Belongs to the NRP synthetase family.

It functions in the pathway secondary metabolite biosynthesis. Nonribosomal peptide synthetase; part of the gene cluster that mediates the biosynthesis of malformins, cyclic pentapeptides with a disulfide bond between 2 consecutive cysteins, that show potential anti-tumor as well as antimalarial and antitrypanosomal properties. The nonribosomal peptide synthetase mlfA is responsible of the formation of the cyclic pentapeptide. The malformin biosynthesis clusters in malformin-producing fungi also contain enzymes involved in the formation of the disulfide bond between the two consecutive cysteins within malformins, in addition to additional tailoring enzymes such as methyltransferases or oxidoreductases. They are also composed of up to 4 major facilitator superfamily transporters, and transcription factors probably involved in the regulation of the expression of those clusters. The sequence is that of Malformin synthetase mlfA from Aspergillus homomorphus (strain CBS 101889).